The chain runs to 583 residues: 2-succinyl-5-enolpyruvyl-6-hydroxy-3-cyclohexene-1-carboxylate synthase (583 aa).

The protein belongs to the TPP enzyme family. MenD subfamily. As to quaternary structure, homodimer. Requires Mg(2+) as cofactor. Mn(2+) serves as cofactor. The cofactor is thiamine diphosphate.

It carries out the reaction isochorismate + 2-oxoglutarate + H(+) = 5-enolpyruvoyl-6-hydroxy-2-succinyl-cyclohex-3-ene-1-carboxylate + CO2. The protein operates within quinol/quinone metabolism; 1,4-dihydroxy-2-naphthoate biosynthesis; 1,4-dihydroxy-2-naphthoate from chorismate: step 2/7. It participates in quinol/quinone metabolism; menaquinone biosynthesis. In terms of biological role, catalyzes the thiamine diphosphate-dependent decarboxylation of 2-oxoglutarate and the subsequent addition of the resulting succinic semialdehyde-thiamine pyrophosphate anion to isochorismate to yield 2-succinyl-5-enolpyruvyl-6-hydroxy-3-cyclohexene-1-carboxylate (SEPHCHC). This Chlorobium phaeovibrioides (strain DSM 265 / 1930) (Prosthecochloris vibrioformis (strain DSM 265)) protein is 2-succinyl-5-enolpyruvyl-6-hydroxy-3-cyclohexene-1-carboxylate synthase.